The chain runs to 277 residues: 3-methyl-2-oxobutanoate hydroxymethyltransferase (277 aa).

The Mg(2+) site is built by aspartate 58 and aspartate 97. 3-methyl-2-oxobutanoate contacts are provided by residues 58 to 59 (DS), aspartate 97, and lysine 127. Mg(2+) is bound at residue glutamate 129. Glutamate 195 acts as the Proton acceptor in catalysis.

This sequence belongs to the PanB family. In terms of assembly, homodecamer; pentamer of dimers. It depends on Mg(2+) as a cofactor.

Its subcellular location is the cytoplasm. The enzyme catalyses 3-methyl-2-oxobutanoate + (6R)-5,10-methylene-5,6,7,8-tetrahydrofolate + H2O = 2-dehydropantoate + (6S)-5,6,7,8-tetrahydrofolate. It participates in cofactor biosynthesis; (R)-pantothenate biosynthesis; (R)-pantoate from 3-methyl-2-oxobutanoate: step 1/2. In terms of biological role, catalyzes the reversible reaction in which hydroxymethyl group from 5,10-methylenetetrahydrofolate is transferred onto alpha-ketoisovalerate to form ketopantoate. This chain is 3-methyl-2-oxobutanoate hydroxymethyltransferase, found in Leifsonia xyli subsp. xyli (strain CTCB07).